A 159-amino-acid polypeptide reads, in one-letter code: Nucleotide-binding protein PST_3153 (159 aa).

It belongs to the YajQ family.

Its function is as follows. Nucleotide-binding protein. This is Nucleotide-binding protein PST_3153 from Stutzerimonas stutzeri (strain A1501) (Pseudomonas stutzeri).